Here is a 192-residue protein sequence, read N- to C-terminus: MSKSSDRINLTNQFLIAMPNMADPTFSGTVVYLCDHSERGALGLVINRPTDIDLESLFNRIDLKLEIEPLLHIPVYFGGPVQTERGFVLHEPVEGSAYNSSMTVEGGLEMTTSKDVLEAVATGTGPKRFLLTLGHAGWGAGQLEEEISKNGWLTVAADPRIVFDTPAEERFEAALGLLGVSSSMLSGEAGHA.

This sequence belongs to the UPF0301 (AlgH) family.

This chain is UPF0301 protein BMA10247_1859, found in Burkholderia mallei (strain NCTC 10247).